We begin with the raw amino-acid sequence, 78 residues long: Acyl carrier protein (78 aa).

A Carrier domain is found at 2 to 77 (SSIEERVKKI…LAIDYINANL (76 aa)). Ser-37 carries the post-translational modification O-(pantetheine 4'-phosphoryl)serine.

Belongs to the acyl carrier protein (ACP) family. Post-translationally, 4'-phosphopantetheine is transferred from CoA to a specific serine of apo-ACP by AcpS. This modification is essential for activity because fatty acids are bound in thioester linkage to the sulfhydryl of the prosthetic group.

The protein resides in the cytoplasm. It participates in lipid metabolism; fatty acid biosynthesis. Its function is as follows. Carrier of the growing fatty acid chain in fatty acid biosynthesis. The polypeptide is Acyl carrier protein (Cellvibrio japonicus (strain Ueda107) (Pseudomonas fluorescens subsp. cellulosa)).